The sequence spans 697 residues: Glycine--tRNA ligase beta subunit (697 aa).

This sequence belongs to the class-II aminoacyl-tRNA synthetase family. Tetramer of two alpha and two beta subunits.

It is found in the cytoplasm. It catalyses the reaction tRNA(Gly) + glycine + ATP = glycyl-tRNA(Gly) + AMP + diphosphate. This Solidesulfovibrio magneticus (strain ATCC 700980 / DSM 13731 / RS-1) (Desulfovibrio magneticus) protein is Glycine--tRNA ligase beta subunit.